Here is a 521-residue protein sequence, read N- to C-terminus: MFS siderochrome iron transporter 1 (521 aa).

The segment covering 1 to 10 (MDKTASLTSQ) has biased composition (polar residues). The interval 1–29 (MDKTASLTSQDAEKHDPDALRKERATDPP) is disordered. Residues 11-29 (DAEKHDPDALRKERATDPP) show a composition bias toward basic and acidic residues. 5 helical membrane passes run 62–82 (WGLF…PLMG), 99–119 (FLSL…AFGC), 126–146 (WSFN…GGTQ), 148–168 (FVAL…NMPV), and 187–207 (ILSI…WPLI). Asparagine 209 is a glycosylation site (N-linked (GlcNAc...) asparagine). A run of 6 helical transmembrane segments spans residues 229-249 (YLLF…FFVF), 330-350 (LAWS…ASTL), 379-399 (VIIA…VEQP), 404-424 (KGTL…TTTA), 431-451 (LGWN…LYAI), and 466-486 (GLTA…ALYA). Asparagine 487 is a glycosylation site (N-linked (GlcNAc...) asparagine). Residues 491 to 511 (AVPVYVSGALIIASGAMALLL) form a helical membrane-spanning segment.

This sequence belongs to the major facilitator superfamily.

The protein localises to the membrane. In terms of biological role, major facilitator transporter probably involved in siderophore basidioferrin transmembrane transport. This chain is MFS siderochrome iron transporter 1, found in Ceriporiopsis subvermispora (strain B) (White-rot fungus).